A 565-amino-acid polypeptide reads, in one-letter code: 2-isopropylmalate synthase (565 aa).

The Pyruvate carboxyltransferase domain occupies 37-312 (PRWCSVDLRD…DPMIDLSDID (276 aa)). Mg(2+)-binding residues include Asp46, His251, His253, and Asn287. Positions 446 to 565 (EGGDPAASLE…SAVNRASRES (120 aa)) are regulatory domain.

This sequence belongs to the alpha-IPM synthase/homocitrate synthase family. LeuA type 2 subfamily. As to quaternary structure, homodimer. It depends on Mg(2+) as a cofactor.

The protein localises to the cytoplasm. The catalysed reaction is 3-methyl-2-oxobutanoate + acetyl-CoA + H2O = (2S)-2-isopropylmalate + CoA + H(+). It functions in the pathway amino-acid biosynthesis; L-leucine biosynthesis; L-leucine from 3-methyl-2-oxobutanoate: step 1/4. Functionally, catalyzes the condensation of the acetyl group of acetyl-CoA with 3-methyl-2-oxobutanoate (2-ketoisovalerate) to form 3-carboxy-3-hydroxy-4-methylpentanoate (2-isopropylmalate). In Parafrankia sp. (strain EAN1pec), this protein is 2-isopropylmalate synthase.